A 521-amino-acid chain; its full sequence is Probable rhamnogalacturonase B (521 aa).

The first 21 residues, 1-21 (MRLHAFTLLSLLGLVPSFAAA), serve as a signal peptide directing secretion. Cysteines 42 and 68 form a disulfide. N145 is a glycosylation site (N-linked (GlcNAc...) asparagine). The active-site Proton donor is the D219. C221 and C238 are joined by a disulfide. Residue N239 is glycosylated (N-linked (GlcNAc...) asparagine). The active site involves H294. A glycan (N-linked (GlcNAc...) asparagine) is linked at N321. Disulfide bonds link C344–C350 and C372–C381. The tract at residues 462–521 (ETPAAASRSEQVVQGAPQETGQSAPESAGPVPSGNPGPVPTGGSRPSRHRHGHHHFGSAI) is disordered. The span at 469–486 (RSEQVVQGAPQETGQSAP) shows a compositional bias: polar residues. The segment covering 507–521 (PSRHRHGHHHFGSAI) has biased composition (basic residues).

The protein belongs to the glycosyl hydrolase 28 family.

The protein resides in the secreted. The catalysed reaction is Endohydrolysis of alpha-D-GalA-(1-&gt;2)-alpha-L-Rha glycosidic bond in the rhamnogalacturonan I backbone with initial inversion of anomeric configuration releasing oligosaccharides with beta-D-GalA at the reducing end.. In terms of biological role, pectinolytic enzymes consist of four classes of enzymes: pectine lyase, polygalacturonase, pectin methylesterase and rhamnogalacturonase. Hydrolyzes alpha-D-galacturonopyranosyl-(1,2)-alpha-L-rhamnopyranosyl linkages in the backbone of the hairy regions of pectins. This is Probable rhamnogalacturonase B (rhgB) from Aspergillus fumigatus (strain CBS 144.89 / FGSC A1163 / CEA10) (Neosartorya fumigata).